The sequence spans 319 residues: Succinoglycan biosynthesis protein ExoW (319 aa).

Belongs to the glycosyltransferase 2 family.

It localises to the cell membrane. The protein operates within glycan metabolism; exopolysaccharide biosynthesis. Its function is as follows. Glycosyltransferase required for the synthesis of succinoglycan (EPS I). Needed for the addition of the seventh sugar (glucose), catalyzes the formation of a beta-1,3 linkage between the seventh and eighth sugar. The protein is Succinoglycan biosynthesis protein ExoW (exoW) of Rhizobium meliloti (strain 1021) (Ensifer meliloti).